An 883-amino-acid polypeptide reads, in one-letter code: Phosphoenolpyruvate carboxylase (883 aa).

Catalysis depends on residues histidine 138 and lysine 546.

The protein belongs to the PEPCase type 1 family. It depends on Mg(2+) as a cofactor.

The enzyme catalyses oxaloacetate + phosphate = phosphoenolpyruvate + hydrogencarbonate. Functionally, forms oxaloacetate, a four-carbon dicarboxylic acid source for the tricarboxylic acid cycle. In Escherichia coli O7:K1 (strain IAI39 / ExPEC), this protein is Phosphoenolpyruvate carboxylase.